The following is a 20-amino-acid chain: Protein PR-L2 (20 aa).

Residues 1-20 (SVFAFENEQSSTIAPARLYK) are disordered.

It belongs to the BetVI family.

The protein is Protein PR-L2 of Lupinus luteus (European yellow lupine).